Consider the following 149-residue polypeptide: 5-hydroxytryptamine receptor 1E (149 aa).

Over 1-6 (HQPANY) the chain is Extracellular. Residues 7–31 (LICSLAVTDLLVAVLVMPLSIMYIV) traverse the membrane as a helical segment. Residues 32 to 39 (MDSWRLGY) are Cytoplasmic-facing. The helical transmembrane segment at 40–65 (FICEVWLSVDMTCCTCSILHLCVIAL) threads the bilayer. A disulfide bond links C42 and C120. Serotonin contacts are provided by D49 and C53. A DRY motif; important for ligand-induced conformation changes motif is present at residues 66 to 68 (DRY). At 66 to 85 (DRYWAITNAIEYARKRTAKR) the chain is on the extracellular side. The helical transmembrane segment at 86 to 104 (AGLMILTVWTISIFISMPP) threads the bilayer. Topologically, residues 105-149 (LFWRSHRQLSPPPSQCAIQHDHVIYTIYSTLGAFYIPLTLILILY) are cytoplasmic.

Belongs to the G-protein coupled receptor 1 family.

It is found in the cell membrane. Its function is as follows. G-protein coupled receptor for 5-hydroxytryptamine (serotonin). Also functions as a receptor for various alkaloids and psychoactive substances. Ligand binding causes a conformation change that triggers signaling via guanine nucleotide-binding proteins (G proteins) and modulates the activity of downstream effectors, such as adenylate cyclase. HTR1E is coupled to G(i)/G(o) G alpha proteins and mediates inhibitory neurotransmission by inhibiting adenylate cyclase activity. In Sus scrofa (Pig), this protein is 5-hydroxytryptamine receptor 1E (HTR1E).